The chain runs to 175 residues: Shikimate kinase (175 aa).

11–16 (GAGKTT) provides a ligand contact to ATP. T15 contributes to the Mg(2+) binding site. The substrate site is built by D33, R57, and G79. R118 is a binding site for ATP. R140 lines the substrate pocket.

Belongs to the shikimate kinase family. Monomer. The cofactor is Mg(2+).

The protein resides in the cytoplasm. It catalyses the reaction shikimate + ATP = 3-phosphoshikimate + ADP + H(+). It participates in metabolic intermediate biosynthesis; chorismate biosynthesis; chorismate from D-erythrose 4-phosphate and phosphoenolpyruvate: step 5/7. Catalyzes the specific phosphorylation of the 3-hydroxyl group of shikimic acid using ATP as a cosubstrate. This Bacteroides thetaiotaomicron (strain ATCC 29148 / DSM 2079 / JCM 5827 / CCUG 10774 / NCTC 10582 / VPI-5482 / E50) protein is Shikimate kinase.